Reading from the N-terminus, the 142-residue chain is Large ribosomal subunit protein uL11 (142 aa).

This sequence belongs to the universal ribosomal protein uL11 family. In terms of assembly, part of the ribosomal stalk of the 50S ribosomal subunit. Interacts with L10 and the large rRNA to form the base of the stalk. L10 forms an elongated spine to which L12 dimers bind in a sequential fashion forming a multimeric L10(L12)X complex. Post-translationally, one or more lysine residues are methylated.

Its function is as follows. Forms part of the ribosomal stalk which helps the ribosome interact with GTP-bound translation factors. In Shewanella loihica (strain ATCC BAA-1088 / PV-4), this protein is Large ribosomal subunit protein uL11.